The primary structure comprises 213 residues: tRNA (guanine-N(7)-)-methyltransferase (213 aa).

S-adenosyl-L-methionine-binding residues include E44, E69, N96, and D118. The active site involves D118. K122 provides a ligand contact to substrate. The tract at residues 124–129 (RHEKRR) is interaction with RNA. Substrate is bound by residues D154 and 191–194 (TEYE).

It belongs to the class I-like SAM-binding methyltransferase superfamily. TrmB family.

The catalysed reaction is guanosine(46) in tRNA + S-adenosyl-L-methionine = N(7)-methylguanosine(46) in tRNA + S-adenosyl-L-homocysteine. It participates in tRNA modification; N(7)-methylguanine-tRNA biosynthesis. Functionally, catalyzes the formation of N(7)-methylguanine at position 46 (m7G46) in tRNA. This Oceanobacillus iheyensis (strain DSM 14371 / CIP 107618 / JCM 11309 / KCTC 3954 / HTE831) protein is tRNA (guanine-N(7)-)-methyltransferase.